A 466-amino-acid polypeptide reads, in one-letter code: MVGDTIAAVATPPGEGGIGIVRVSGPGARDVLKAVFRPRYGRGVDDWASHTLHLGTIIHPDDHRVIDEALVAWMVAPRTFTTEDVVEFHCHGGSVPVRETLGAVLRAGARLAEPGEFTRRAFLGGRLDLAQAEAIIEVIRAKTRDGLGAAVSQLEGQLSRRIRKVRDDLLALLAHLEAMIDFPEEDLPDIGSERICTDLMQIQRQIGDMLERSRTGRVLREGWRTVIVGRPNVGKSSLMNALLDEQRAIVTEIPGTTRDAIEEYIDLGGIPLRIVDTAGIRETEDVVERIGVEKTREYLEKADLALVVLDGSDSLTAEDETLLLSLAGRPAVVLVNKSDLAVRRLDEKRLRSLVGEMPIISVSAKEGWGLKELTELIRRMVYGDDGLGYAPDGGRLALVTQARHREALERSYAHLRQALDAVAHGASPDFLTIDLKAAWEALGEITGDTVGEDILDKIFSSFCIGK.

The (6S)-5-formyl-5,6,7,8-tetrahydrofolate site is built by Arg22, Glu87, and Arg126. Residues 222-382 (GWRTVIVGRP…LTELIRRMVY (161 aa)) enclose the TrmE-type G domain. Residue Asn232 coordinates K(+). GTP-binding positions include 232–237 (NVGKSS), 251–257 (TEIPGTT), and 276–279 (DTAG). Mg(2+) is bound at residue Ser236. Residues Thr251, Ile253, and Thr256 each contribute to the K(+) site. Thr257 is a Mg(2+) binding site. (6S)-5-formyl-5,6,7,8-tetrahydrofolate is bound at residue Lys466.

This sequence belongs to the TRAFAC class TrmE-Era-EngA-EngB-Septin-like GTPase superfamily. TrmE GTPase family. As to quaternary structure, homodimer. Heterotetramer of two MnmE and two MnmG subunits. Requires K(+) as cofactor.

It is found in the cytoplasm. In terms of biological role, exhibits a very high intrinsic GTPase hydrolysis rate. Involved in the addition of a carboxymethylaminomethyl (cmnm) group at the wobble position (U34) of certain tRNAs, forming tRNA-cmnm(5)s(2)U34. This Heliobacterium modesticaldum (strain ATCC 51547 / Ice1) protein is tRNA modification GTPase MnmE.